The following is a 106-amino-acid chain: SH3 domain-binding glutamic acid-rich-like protein 2 (106 aa).

The SH3-binding signature appears at 61 to 67 (QGNPLPP).

It belongs to the SH3BGR family.

It is found in the nucleus. The polypeptide is SH3 domain-binding glutamic acid-rich-like protein 2 (sh3bgrl2) (Xenopus tropicalis (Western clawed frog)).